The primary structure comprises 480 residues: Zinc finger protein ztf-16 (480 aa).

The C2H2-type 1 zinc-finger motif lies at 5–27 (NACTECGFTTTVFSEFQGHIEKH). Residues 25–75 (EKHENEHSRSSSGEMSNSQTIEWGDGIQSSTPSPRSTPPSDPTPSPDSDEH) form a disordered region. Residues 34–45 (SSSGEMSNSQTI) show a composition bias toward polar residues. Residues 59 to 69 (RSTPPSDPTPS) show a composition bias toward pro residues. 5 C2H2-type zinc fingers span residues 103–125 (HVCP…LEAH), 133–155 (YQCD…RMRH), 161–183 (YECR…SMTH), 190–215 (FDCP…EETH), and 223–246 (ASCK…QTRH). Disordered stretches follow at residues 243–275 (QTRH…MDPA), 290–311 (EFSP…DKIP), and 376–417 (TSSS…KEDE). The segment covering 244-259 (TRHDDSESSPKKENTP) has biased composition (basic and acidic residues). Composition is skewed to low complexity over residues 292–305 (SPPN…STSS) and 376–403 (TSSS…SLSL). Residues 404–413 (TEKEKSPTPE) show a composition bias toward basic and acidic residues. 2 C2H2-type zinc fingers span residues 420 to 442 (VECC…KSLH) and 448 to 472 (FKCA…FADH).

It belongs to the Ikaros C2H2-type zinc-finger protein family. Expressed in the somatic gonad, hypodermis and cells in the head and tail. Expressed in amphid and phasmid sheath glia, amphid and phasmid socket glia, and in neurons in the head.

The protein resides in the nucleus. Its function is as follows. Positively regulates the expression of ver-1 in the amphid sheath glia of amphid sensory neurons. Together with ehn-3, plays a role in somatic gonad development and is required for proper gonadal primordium assembly and somatic gonad precursor cell morphology. In Caenorhabditis elegans, this protein is Zinc finger protein ztf-16.